The primary structure comprises 601 residues: MTTRTIDNIRNFSIVAHIDHGKSTLADRLIQQTGTVALRDMSEQMLDSMDIERERGITIKANTVRLEYKAEDGQDYVLNLMDTPGHVDFAYEVSRSLAACEGSLLVVDASQGVEAQTLANVYQALDANHEIVPVLNKVDLPAAEPDRVKEQIEEVIGLDASEAVPISAKTGLNIEAVLEAIVKRLPPPKGDREAPLKALLVDSWYDVYLGVVVLVRIVDGVLKKGMTIRMMGADAAYGVDRIGVFRPKMADIGELGPGEVGFFTGSIKEVADTRVGDTITEDKRQTTQMLPGFKEVQAVVFCGLFPVDAADFENLRGAMGKLRLNDASFSYEMETSAALGFGFRCGFLGLLHLEIIQERLEREFNLDLISTAPSVVYRLMMRDGELKELHNPADMPDPMKIETVEEPWIRATILTPDDYLGGVLKLCQDRRGIQIDLNYVGKRAMVVYDLPLNEVVFDFYDRLKSISKGYASFDYHVSDYREGDLVKMSILVNAEPVDALSMLVHRTRAESRGRAMCEKLKDLIPRHLFQIPVQAAIGGKIIARETIRALSKDVTAKCYGGDISRKRKLLDKQKEGKKRMRQFGRVEIPQEAFIAALKMDD.

Positions 7–189 constitute a tr-type G domain; that stretch reads DNIRNFSIVA…AIVKRLPPPK (183 aa). Residues 19-24 and 136-139 contribute to the GTP site; these read DHGKST and NKVD.

It belongs to the TRAFAC class translation factor GTPase superfamily. Classic translation factor GTPase family. LepA subfamily.

The protein localises to the cell inner membrane. The enzyme catalyses GTP + H2O = GDP + phosphate + H(+). Required for accurate and efficient protein synthesis under certain stress conditions. May act as a fidelity factor of the translation reaction, by catalyzing a one-codon backward translocation of tRNAs on improperly translocated ribosomes. Back-translocation proceeds from a post-translocation (POST) complex to a pre-translocation (PRE) complex, thus giving elongation factor G a second chance to translocate the tRNAs correctly. Binds to ribosomes in a GTP-dependent manner. This Methylorubrum populi (strain ATCC BAA-705 / NCIMB 13946 / BJ001) (Methylobacterium populi) protein is Elongation factor 4.